Consider the following 304-residue polypeptide: Ribonuclease HII (304 aa).

Residues 1–53 are disordered; that stretch reads MIRDTKQPIKVPAKPASRSGGKAKTVKPKTVKPKAVKAADGKAASAKASTSKA. Over residues 24–35 the composition is skewed to basic residues; that stretch reads KTVKPKTVKPKA. Over residues 36–53 the composition is skewed to low complexity; sequence VKAADGKAASAKASTSKA. Positions 96 to 284 constitute an RNase H type-2 domain; sequence WPIAGCDEAG…VAAAWQKIEG (189 aa). A divalent metal cation contacts are provided by Asp-102, Glu-103, and Asp-193.

It belongs to the RNase HII family. The cofactor is Mn(2+). Mg(2+) serves as cofactor.

The protein resides in the cytoplasm. The enzyme catalyses Endonucleolytic cleavage to 5'-phosphomonoester.. Functionally, endonuclease that specifically degrades the RNA of RNA-DNA hybrids. The sequence is that of Ribonuclease HII from Rhodopseudomonas palustris (strain ATCC BAA-98 / CGA009).